The sequence spans 360 residues: Probable cinnamyl alcohol dehydrogenase 1 (360 aa).

Residue C47 participates in Zn(2+) binding. T49 contacts NADP(+). 7 residues coordinate Zn(2+): H69, E70, C100, C103, C106, C114, and C163. NADP(+) is bound by residues T167, 189-194 (GLGGVG), 212-217 (SSSDKK), T252, G276, and 299-301 (SFI).

Belongs to the zinc-containing alcohol dehydrogenase family. Homodimer. Zn(2+) is required as a cofactor.

The catalysed reaction is (E)-cinnamyl alcohol + NADP(+) = (E)-cinnamaldehyde + NADPH + H(+). The enzyme catalyses (E)-coniferol + NADP(+) = (E)-coniferaldehyde + NADPH + H(+). It catalyses the reaction (E)-sinapyl alcohol + NADP(+) = (E)-sinapaldehyde + NADPH + H(+). It carries out the reaction (E)-4-coumaroyl alcohol + NADP(+) = (E)-4-coumaraldehyde + NADPH + H(+). The catalysed reaction is (E)-caffeyl alcohol + NADP(+) = (E)-caffeyl aldehyde + NADPH + H(+). It participates in aromatic compound metabolism; phenylpropanoid biosynthesis. In terms of biological role, involved in lignin biosynthesis. Catalyzes the final step specific for the production of lignin monomers. Catalyzes the NADPH-dependent reduction of coniferaldehyde, 5-hydroxyconiferaldehyde, sinapaldehyde, 4-coumaraldehyde and caffeyl aldehyde to their respective alcohols. This chain is Probable cinnamyl alcohol dehydrogenase 1 (CAD1), found in Aralia cordata (Udo).